Consider the following 269-residue polypeptide: Expansin-B9 (269 aa).

Residues 1 to 24 form the signal peptide; the sequence is MGSLANNIMVVGAVLAALVVGGSC. Asn-34 carries N-linked (GlcNAc...) asparagine glycosylation. Residues 63–169 enclose the Expansin-like EG45 domain; that stretch reads GGACGIKNVN…RRVRCKYPAG (107 aa). 3 cysteine pairs are disulfide-bonded: Cys-66/Cys-94, Cys-97/Cys-164, and Cys-102/Cys-108. Residues 183 to 264 enclose the Expansin-like CBD domain; it reads NYVAVLVKFV…NWRPDAVYTS (82 aa).

It belongs to the expansin family. Expansin B subfamily. Expressed in anthers and pollen.

It is found in the secreted. It localises to the cell wall. The protein localises to the membrane. Functionally, may aid fertilization by loosening the cell wall of the stigma and style, thereby facilitating penetration of the pollen tube. Acts selectively on grass cell walls, which are relatively poor in pectins and xyloglucans and rich in glucuronoarabinoxylans and (1-3),(1-4)-beta-D-glucans, when compared with cell walls of other angiosperms, including other monocots. The sequence is that of Expansin-B9 (EXPB9) from Zea mays (Maize).